The chain runs to 338 residues: Anthranilate phosphoribosyltransferase (338 aa).

5-phospho-alpha-D-ribose 1-diphosphate is bound by residues Gly78, 81–82, Thr86, 88–91, 106–114, and Ser118; these read GD, NIST, and KHGNRSVSS. Anthranilate is bound at residue Gly78. A Mg(2+)-binding site is contributed by Ser90. Residue Asn109 participates in anthranilate binding. Arg164 is an anthranilate binding site. Mg(2+) contacts are provided by Asp223 and Glu224.

Belongs to the anthranilate phosphoribosyltransferase family. In terms of assembly, homodimer. It depends on Mg(2+) as a cofactor.

It catalyses the reaction N-(5-phospho-beta-D-ribosyl)anthranilate + diphosphate = 5-phospho-alpha-D-ribose 1-diphosphate + anthranilate. It participates in amino-acid biosynthesis; L-tryptophan biosynthesis; L-tryptophan from chorismate: step 2/5. Functionally, catalyzes the transfer of the phosphoribosyl group of 5-phosphorylribose-1-pyrophosphate (PRPP) to anthranilate to yield N-(5'-phosphoribosyl)-anthranilate (PRA). The polypeptide is Anthranilate phosphoribosyltransferase (Bacillus subtilis (strain 168)).